We begin with the raw amino-acid sequence, 172 residues long: Adenine phosphoribosyltransferase (172 aa).

It belongs to the purine/pyrimidine phosphoribosyltransferase family. Homodimer.

The protein resides in the cytoplasm. The enzyme catalyses AMP + diphosphate = 5-phospho-alpha-D-ribose 1-diphosphate + adenine. The protein operates within purine metabolism; AMP biosynthesis via salvage pathway; AMP from adenine: step 1/1. Its function is as follows. Catalyzes a salvage reaction resulting in the formation of AMP, that is energically less costly than de novo synthesis. The polypeptide is Adenine phosphoribosyltransferase (Methanococcus maripaludis (strain C5 / ATCC BAA-1333)).